The sequence spans 241 residues: 2-heptyl-1-hydroxyquinolin-4(1H)-one methyltransferase (241 aa).

The protein belongs to the methyltransferase superfamily. As to quaternary structure, monomer.

Its subcellular location is the cytoplasm. The enzyme catalyses 2-heptyl-1-hydroxy-4(1H)-quinolinone + S-adenosyl-L-methionine = 2-heptyl-1-methoxy-4(1H)-quinolinone + S-adenosyl-L-homocysteine + H(+). Involved in cellular response to chemical stress and may contribute to resistance toward antimicrobial natural compounds as well as drugs. Catalyzes the methylation and detoxification of the P.aeruginosa toxin 2-heptyl-1-hydroxy-4(1H)-quinolinone (HQNO) to 2-heptyl-1-methoxy-4(1H)-quinolinone (HMOQ). This Mycobacterium bovis (strain BCG / Pasteur 1173P2) protein is 2-heptyl-1-hydroxyquinolin-4(1H)-one methyltransferase.